A 178-amino-acid chain; its full sequence is Cell division protein SepF (178 aa).

The span at 21-46 (YESEQSVATHHDEERPQAQEREERRA) shows a compositional bias: basic and acidic residues. The segment at 21–65 (YESEQSVATHHDEERPQAQEREERRAPAPVREVVREMPTVDAEEE) is disordered.

It belongs to the SepF family. In terms of assembly, homodimer. Interacts with FtsZ.

It localises to the cytoplasm. In terms of biological role, cell division protein that is part of the divisome complex and is recruited early to the Z-ring. Probably stimulates Z-ring formation, perhaps through the cross-linking of FtsZ protofilaments. Its function overlaps with FtsA. The protein is Cell division protein SepF of Paenarthrobacter aurescens (strain TC1).